A 139-amino-acid chain; its full sequence is Ribulose bisphosphate carboxylase small subunit (139 aa).

The protein belongs to the RuBisCO small chain family. Heterohexadecamer of 8 large and 8 small subunits.

The protein resides in the plastid. Its subcellular location is the chloroplast. Functionally, ruBisCO catalyzes two reactions: the carboxylation of D-ribulose 1,5-bisphosphate, the primary event in carbon dioxide fixation, as well as the oxidative fragmentation of the pentose substrate in the photorespiration process. Both reactions occur simultaneously and in competition at the same active site. Although the small subunit is not catalytic it is essential for maximal activity. This Detonula confervacea (Marine diatom) protein is Ribulose bisphosphate carboxylase small subunit.